Consider the following 75-residue polypeptide: Ferredoxin-thioredoxin reductase, variable chain (75 aa).

The interval 43–46 (QGRP) is interaction with ferredoxin.

It belongs to the ferredoxin thioredoxin reductase alpha subunit family. Heterodimer of subunit A (variable subunit) and subunit B (catalytic subunit). Heterodimeric FTR forms a complex with ferredoxin and thioredoxin.

Its function is as follows. Variable subunit of the ferredoxin-thioredoxin reductase (FTR), which catalyzes the two-electron reduction of thioredoxins by the electrons provided by reduced ferredoxin. This is Ferredoxin-thioredoxin reductase, variable chain (ftrV) from Synechocystis sp. (strain ATCC 27184 / PCC 6803 / Kazusa).